The chain runs to 205 residues: UPF0548 protein At2g17695 (205 aa).

This sequence belongs to the UPF0548 family.

The polypeptide is UPF0548 protein At2g17695 (Arabidopsis thaliana (Mouse-ear cress)).